Consider the following 154-residue polypeptide: uncharacterized protein (154 aa).

Cysteine 4, cysteine 7, cysteine 16, cysteine 19, cysteine 24, cysteine 28, histidine 32, and cysteine 36 together coordinate Zn(2+). An HIT-type zinc finger spans residues 4-36; the sequence is CSICNESEIKYKCPKCSFPYCSLPCWKIHQSQC.

This is an uncharacterized protein from Schizosaccharomyces pombe (strain 972 / ATCC 24843) (Fission yeast).